Here is a 297-residue protein sequence, read N- to C-terminus: 4-hydroxy-tetrahydrodipicolinate synthase (297 aa).

Threonine 55 contacts pyruvate. The Proton donor/acceptor role is filled by tyrosine 144. Lysine 172 functions as the Schiff-base intermediate with substrate in the catalytic mechanism. Isoleucine 213 is a binding site for pyruvate.

It belongs to the DapA family. As to quaternary structure, homotetramer; dimer of dimers.

The protein resides in the cytoplasm. It carries out the reaction L-aspartate 4-semialdehyde + pyruvate = (2S,4S)-4-hydroxy-2,3,4,5-tetrahydrodipicolinate + H2O + H(+). It participates in amino-acid biosynthesis; L-lysine biosynthesis via DAP pathway; (S)-tetrahydrodipicolinate from L-aspartate: step 3/4. Functionally, catalyzes the condensation of (S)-aspartate-beta-semialdehyde [(S)-ASA] and pyruvate to 4-hydroxy-tetrahydrodipicolinate (HTPA). The chain is 4-hydroxy-tetrahydrodipicolinate synthase from Lactococcus lactis subsp. cremoris (strain MG1363).